The chain runs to 416 residues: Calreticulin (416 aa).

Positions 1-25 (MENRGRNPSFLSLLLLLSLFAIASA) are cleaved as a signal peptide. N57 is a glycosylation site (N-linked (GlcNAc...) asparagine). Cysteines 111 and 143 form a disulfide. Y115, K117, Y134, and D141 together coordinate an alpha-D-glucoside. The N-linked (GlcNAc...) asparagine glycan is linked to N157. Tandem repeats lie at residues 197–208 (KQTGSLYTDWDL), 216–227 (DPEAKKPEDWDD), 233–244 (DPEDKKPEGYDD), 251–262 (DPEAKKPEDWDD), 266–276 (GEWTAPTIPNP), 280–290 (GPWKAKKIKNP), and 294–304 (GKWKAPMIDNP). Residues 197 to 262 (KQTGSLYTDW…EAKKPEDWDD (66 aa)) form a 4 X approximate repeats region. Residues 217-241 (PEAKKPEDWDDKEFIPDPEDKKPEG) are compositionally biased toward basic and acidic residues. The interval 217-281 (PEAKKPEDWD…TIPNPEYKGP (65 aa)) is disordered. Residues 266-304 (GEWTAPTIPNPEYKGPWKAKKIKNPNYKGKWKAPMIDNP) form a 3 X approximate repeats region. E324 provides a ligand contact to an alpha-D-glucoside. The span at 351–381 (EETWGKQKDAEKAAFEELEKKREEEETKDDP) shows a compositional bias: basic and acidic residues. Positions 351–416 (EETWGKQKDA…DKDDDQHDEL (66 aa)) are disordered. A compositionally biased stretch (acidic residues) spans 382–400 (VESDAEDEDEAEADDSDKD). Basic and acidic residues predominate over residues 401 to 416 (DADKSDDKDDDQHDEL). A Prevents secretion from ER motif is present at residues 413-416 (HDEL).

It belongs to the calreticulin family.

It localises to the endoplasmic reticulum lumen. Functionally, molecular calcium-binding chaperone promoting folding, oligomeric assembly and quality control in the ER via the calreticulin/calnexin cycle. This lectin may interact transiently with almost all of the monoglucosylated glycoproteins that are synthesized in the ER. The polypeptide is Calreticulin (Beta vulgaris (Sugar beet)).